Reading from the N-terminus, the 316-residue chain is Melanocyte-stimulating hormone receptor (316 aa).

At 1 to 37 the chain is on the extracellular side; it reads MPMQGAQRKLLGSLNSTPTATSNLGLAANHTGAPCLE. N-linked (GlcNAc...) asparagine glycosylation occurs at Asn29. A helical membrane pass occupies residues 38-63; it reads VSIPDGLFLSLGLVSLVENMLVVAAI. Residues 64–72 are Cytoplasmic-facing; that stretch reads AKNRNLHSP. The helical transmembrane segment at 73 to 93 threads the bilayer; the sequence is MYCFICCLALSDLLVSGSNML. The Extracellular segment spans residues 94 to 118; it reads ETAVVVLLEAGALATRASVVQQLHN. The helical transmembrane segment at 119-140 threads the bilayer; sequence TIDVLTYSSMLCSLCFVGAIAV. At 141–163 the chain is on the cytoplasmic side; that stretch reads DRYISIFYALRYHSIMTLPRVQR. A helical transmembrane segment spans residues 164–183; that stretch reads VIAAIWVASVTSSTLFITYY. Over 184-191 the chain is Extracellular; the sequence is EHVVALLC. Residues 192-210 traverse the membrane as a helical segment; sequence LVVFLTMLVLMAVLYVHML. Over 211–239 the chain is Cytoplasmic; sequence ARACQHAQGITRLHKRQPPAHQGFGLRGA. Residues 240–265 form a helical membrane-spanning segment; the sequence is ATLTILLGIFFLCWGPFFLHLTLVVF. The Extracellular portion of the chain corresponds to 266-278; that stretch reads CPQHLTCSCIFKN. Residues 279–299 traverse the membrane as a helical segment; that stretch reads FKVFLTLIICNTIIDPLIYAF. At 300 to 316 the chain is on the cytoplasmic side; sequence RSQELCRTLKEVLLCSW. Cys314 is lipidated: S-palmitoyl cysteine.

This sequence belongs to the G-protein coupled receptor 1 family. In terms of assembly, interacts with MGRN1, but does not undergo MGRN1-mediated ubiquitination; this interaction competes with GNAS-binding and thus inhibits agonist-induced cAMP production. Interacts with OPN3; the interaction results in a decrease in MC1R-mediated cAMP signaling and ultimately a decrease in melanin production in melanocytes.

Its subcellular location is the cell membrane. In terms of biological role, receptor for MSH (alpha, beta and gamma) and ACTH. The activity of this receptor is mediated by G proteins which activate adenylate cyclase. Mediates melanogenesis, the production of eumelanin (black/brown) and phaeomelanin (red/yellow), via regulation of cAMP signaling in melanocytes. This chain is Melanocyte-stimulating hormone receptor (MC1R), found in Cebus albifrons (White-fronted capuchin).